Here is a 368-residue protein sequence, read N- to C-terminus: Quinolinate synthase (368 aa).

Iminosuccinate-binding residues include His46 and Ser63. Cys110 is a binding site for [4Fe-4S] cluster. Residues 141-143 and Ser162 contribute to the iminosuccinate site; that span reads YVN. Position 230 (Cys230) interacts with [4Fe-4S] cluster. Iminosuccinate-binding positions include 256–258 and Thr273; that span reads HPE. Cys320 lines the [4Fe-4S] cluster pocket.

This sequence belongs to the quinolinate synthase family. Type 3 subfamily. [4Fe-4S] cluster serves as cofactor.

It is found in the cytoplasm. The catalysed reaction is iminosuccinate + dihydroxyacetone phosphate = quinolinate + phosphate + 2 H2O + H(+). Its pathway is cofactor biosynthesis; NAD(+) biosynthesis; quinolinate from iminoaspartate: step 1/1. In terms of biological role, catalyzes the condensation of iminoaspartate with dihydroxyacetone phosphate to form quinolinate. The sequence is that of Quinolinate synthase from Bacillus cereus (strain G9842).